We begin with the raw amino-acid sequence, 332 residues long: Ferredoxin--NADP reductase (332 aa).

Residues Glu35, Gln43, Tyr48, Val88, Phe122, Asp286, and Ser326 each coordinate FAD.

It belongs to the ferredoxin--NADP reductase type 2 family. Homodimer. It depends on FAD as a cofactor.

It carries out the reaction 2 reduced [2Fe-2S]-[ferredoxin] + NADP(+) + H(+) = 2 oxidized [2Fe-2S]-[ferredoxin] + NADPH. The sequence is that of Ferredoxin--NADP reductase from Limosilactobacillus reuteri (strain DSM 20016) (Lactobacillus reuteri).